Reading from the N-terminus, the 150-residue chain is SsrA-binding protein (150 aa).

Belongs to the SmpB family.

It localises to the cytoplasm. Its function is as follows. Required for rescue of stalled ribosomes mediated by trans-translation. Binds to transfer-messenger RNA (tmRNA), required for stable association of tmRNA with ribosomes. tmRNA and SmpB together mimic tRNA shape, replacing the anticodon stem-loop with SmpB. tmRNA is encoded by the ssrA gene; the 2 termini fold to resemble tRNA(Ala) and it encodes a 'tag peptide', a short internal open reading frame. During trans-translation Ala-aminoacylated tmRNA acts like a tRNA, entering the A-site of stalled ribosomes, displacing the stalled mRNA. The ribosome then switches to translate the ORF on the tmRNA; the nascent peptide is terminated with the 'tag peptide' encoded by the tmRNA and targeted for degradation. The ribosome is freed to recommence translation, which seems to be the essential function of trans-translation. The sequence is that of SsrA-binding protein from Campylobacter jejuni subsp. jejuni serotype O:6 (strain 81116 / NCTC 11828).